A 212-amino-acid polypeptide reads, in one-letter code: Imidazole glycerol phosphate synthase subunit HisH (212 aa).

Residues 3 to 208 form the Glutamine amidotransferase type-1 domain; that stretch reads RIVIVDYGMG…GRMVCDLIST (206 aa). Catalysis depends on Cys81, which acts as the Nucleophile. Catalysis depends on residues His183 and Glu185.

In terms of assembly, heterodimer of HisH and HisF.

The protein localises to the cytoplasm. The enzyme catalyses 5-[(5-phospho-1-deoxy-D-ribulos-1-ylimino)methylamino]-1-(5-phospho-beta-D-ribosyl)imidazole-4-carboxamide + L-glutamine = D-erythro-1-(imidazol-4-yl)glycerol 3-phosphate + 5-amino-1-(5-phospho-beta-D-ribosyl)imidazole-4-carboxamide + L-glutamate + H(+). It carries out the reaction L-glutamine + H2O = L-glutamate + NH4(+). The protein operates within amino-acid biosynthesis; L-histidine biosynthesis; L-histidine from 5-phospho-alpha-D-ribose 1-diphosphate: step 5/9. IGPS catalyzes the conversion of PRFAR and glutamine to IGP, AICAR and glutamate. The HisH subunit catalyzes the hydrolysis of glutamine to glutamate and ammonia as part of the synthesis of IGP and AICAR. The resulting ammonia molecule is channeled to the active site of HisF. In Symbiobacterium thermophilum (strain DSM 24528 / JCM 14929 / IAM 14863 / T), this protein is Imidazole glycerol phosphate synthase subunit HisH.